Consider the following 264-residue polypeptide: Glutamate racemase (264 aa).

Residues 11-12 (DS) and 43-44 (YG) each bind substrate. Catalysis depends on cysteine 74, which acts as the Proton donor/acceptor. A substrate-binding site is contributed by 75–76 (NT). Cysteine 193 functions as the Proton donor/acceptor in the catalytic mechanism. 194–195 (TH) is a substrate binding site.

The protein belongs to the aspartate/glutamate racemases family.

It catalyses the reaction L-glutamate = D-glutamate. It functions in the pathway cell wall biogenesis; peptidoglycan biosynthesis. Its function is as follows. Provides the (R)-glutamate required for cell wall biosynthesis. The protein is Glutamate racemase of Bifidobacterium longum subsp. infantis (strain ATCC 15697 / DSM 20088 / JCM 1222 / NCTC 11817 / S12).